The primary structure comprises 348 residues: uncharacterized protein (348 aa).

WD repeat units lie at residues 59–98 (GFQG…VVYS), 142–182 (GHTD…LIQT), 185–226 (DNLG…LLGT), 229–267 (QQPG…ELFS), 270–309 (GPSL…QVTT), and 312–347 (GHQG…SALA).

This is an uncharacterized protein from Synechocystis sp. (strain ATCC 27184 / PCC 6803 / Kazusa).